We begin with the raw amino-acid sequence, 380 residues long: Cytochrome b (380 aa).

A run of 4 helical transmembrane segments spans residues 34–54, 78–99, 114–134, and 179–199; these read FGSL…LLAM, WLIR…YMHI, WNTG…GYVL, and FFAL…IHLT. Residues H84 and H98 each coordinate heme b. The heme b site is built by H183 and H197. H202 is a binding site for a ubiquinone. The next 4 helical transmembrane spans lie at 227–247, 289–309, 321–341, and 348–368; these read LKDI…ALFS, LGGV…PLLH, LSQL…WIGS, and FIII…ILFP.

This sequence belongs to the cytochrome b family. The cytochrome bc1 complex contains 11 subunits: 3 respiratory subunits (MT-CYB, CYC1 and UQCRFS1), 2 core proteins (UQCRC1 and UQCRC2) and 6 low-molecular weight proteins (UQCRH/QCR6, UQCRB/QCR7, UQCRQ/QCR8, UQCR10/QCR9, UQCR11/QCR10 and a cleavage product of UQCRFS1). This cytochrome bc1 complex then forms a dimer. The cofactor is heme b.

It localises to the mitochondrion inner membrane. Its function is as follows. Component of the ubiquinol-cytochrome c reductase complex (complex III or cytochrome b-c1 complex) that is part of the mitochondrial respiratory chain. The b-c1 complex mediates electron transfer from ubiquinol to cytochrome c. Contributes to the generation of a proton gradient across the mitochondrial membrane that is then used for ATP synthesis. The polypeptide is Cytochrome b (MT-CYB) (Hydrobates pelagicus (European storm-petrel)).